A 310-amino-acid chain; its full sequence is Olfactory receptor 5AR1 (310 aa).

Residues 1–25 (MDKENHSVVTEFVFMGITQDPQLQI) lie on the Extracellular side of the membrane. An N-linked (GlcNAc...) asparagine glycan is attached at Asn5. The chain crosses the membrane as a helical span at residues 26 to 46 (IFFVVFLLVYLVNVIGNVGMI). Residues 47–54 (ILIITDSQ) lie on the Cytoplasmic side of the membrane. The helical transmembrane segment at 55–75 (LHTPMYFFLCNLSFVDLGYSS) threads the bilayer. Residues 76 to 99 (AIAPRMLADFLTKHKVISFSSCAT) are Extracellular-facing. Cys97 and Cys189 form a disulfide bridge. A helical membrane pass occupies residues 100-120 (QFAFFVGFVDAECYVLAAMAY). Over 121-133 (DRFVAICRPLHYS) the chain is Cytoplasmic. The helical transmembrane segment at 134-154 (TLMSKKVCLVLMLGSYFAGLV) threads the bilayer. At 155 to 196 (SLVAHTSLTFSLSYCGSNIINHFFCEIPPLLALSCSDTYISE) the chain is on the extracellular side. The chain crosses the membrane as a helical span at residues 197 to 217 (ILLFSLCGFIEFSTILIIFIS). Cys203 is a binding site for Cu cation. Residues 218-237 (YAFILIAIIRIRSAEGRLKA) are Cytoplasmic-facing. Residues 238-258 (FSTCGSHLTGVTLFYGTVMFM) form a helical membrane-spanning segment. Cu cation-binding residues include Met256 and Arg261. The Extracellular portion of the chain corresponds to 259-271 (YLRPTSSYSLDQD). The helical transmembrane segment at 272 to 292 (KWASVFYTIIIPMLNPLIYSL) threads the bilayer. The Cytoplasmic segment spans residues 293 to 310 (RNKDVKAAFKKLIGKKPQ).

It belongs to the G-protein coupled receptor 1 family.

The protein localises to the cell membrane. Its activity is regulated as follows. Copper binding enhances receptor activity in response to odorant binding. Olfactory receptor that is activated by the binding of organosulfur odorants with thioether groups such as (methylthio)methanethiol (MTMT). The activity of this receptor is mediated by G proteins which activate adenylyl cyclase. This is Olfactory receptor 5AR1 from Mus musculus (Mouse).